A 475-amino-acid polypeptide reads, in one-letter code: Ribulose bisphosphate carboxylase large chain (475 aa).

A propeptide spanning residues 1-2 is cleaved from the precursor; the sequence is MS. Residue Pro-3 is modified to N-acetylproline. Lys-14 is subject to N6,N6,N6-trimethyllysine. Residues Asn-123 and Thr-173 each coordinate substrate. The Proton acceptor role is filled by Lys-175. Residue Lys-177 participates in substrate binding. Mg(2+)-binding residues include Lys-201, Asp-203, and Glu-204. The residue at position 201 (Lys-201) is an N6-carboxylysine. Catalysis depends on His-294, which acts as the Proton acceptor. Residues Arg-295, His-327, and Ser-379 each coordinate substrate.

The protein belongs to the RuBisCO large chain family. Type I subfamily. In terms of assembly, heterohexadecamer of 8 large chains and 8 small chains; disulfide-linked. The disulfide link is formed within the large subunit homodimers. Requires Mg(2+) as cofactor. In terms of processing, the disulfide bond which can form in the large chain dimeric partners within the hexadecamer appears to be associated with oxidative stress and protein turnover.

It is found in the plastid. The protein localises to the chloroplast. The catalysed reaction is 2 (2R)-3-phosphoglycerate + 2 H(+) = D-ribulose 1,5-bisphosphate + CO2 + H2O. The enzyme catalyses D-ribulose 1,5-bisphosphate + O2 = 2-phosphoglycolate + (2R)-3-phosphoglycerate + 2 H(+). In terms of biological role, ruBisCO catalyzes two reactions: the carboxylation of D-ribulose 1,5-bisphosphate, the primary event in carbon dioxide fixation, as well as the oxidative fragmentation of the pentose substrate in the photorespiration process. Both reactions occur simultaneously and in competition at the same active site. The protein is Ribulose bisphosphate carboxylase large chain of Nandina domestica (Heavenly bamboo).